The following is a 276-amino-acid chain: Dermonecrotic toxin LlSicTox-alphaIV2ii (276 aa).

H5 is an active-site residue. Residues E25 and D27 each contribute to the Mg(2+) site. The active-site Nucleophile is the H41. 2 cysteine pairs are disulfide-bonded: C45/C51 and C47/C193. D85 lines the Mg(2+) pocket.

The protein belongs to the arthropod phospholipase D family. Class II subfamily. Mg(2+) serves as cofactor. In terms of tissue distribution, expressed by the venom gland.

It is found in the secreted. The enzyme catalyses an N-(acyl)-sphingosylphosphocholine = an N-(acyl)-sphingosyl-1,3-cyclic phosphate + choline. It catalyses the reaction an N-(acyl)-sphingosylphosphoethanolamine = an N-(acyl)-sphingosyl-1,3-cyclic phosphate + ethanolamine. The catalysed reaction is a 1-acyl-sn-glycero-3-phosphocholine = a 1-acyl-sn-glycero-2,3-cyclic phosphate + choline. It carries out the reaction a 1-acyl-sn-glycero-3-phosphoethanolamine = a 1-acyl-sn-glycero-2,3-cyclic phosphate + ethanolamine. Its function is as follows. Dermonecrotic toxins cleave the phosphodiester linkage between the phosphate and headgroup of certain phospholipids (sphingolipid and lysolipid substrates), forming an alcohol (often choline) and a cyclic phosphate. This toxin acts on sphingomyelin (SM). It may also act on ceramide phosphoethanolamine (CPE), lysophosphatidylcholine (LPC) and lysophosphatidylethanolamine (LPE), but not on lysophosphatidylserine (LPS), and lysophosphatidylglycerol (LPG). It acts by transphosphatidylation, releasing exclusively cyclic phosphate products as second products. Induces dermonecrosis, hemolysis, increased vascular permeability, edema, inflammatory response, and platelet aggregation. This is Dermonecrotic toxin LlSicTox-alphaIV2ii from Loxosceles laeta (South American recluse spider).